A 252-amino-acid chain; its full sequence is MKSRIPVVLLACGSFNPITNMHLRMFEVARDHLHQTGMYQVIQGIISPVNDTYGKKDLAASHHRVAMARLALQTSDWIRVDPWESEQAQWMETVKVLRHHHSKLLRSPPQMEGPDHGKALFSTPAAVPELKLLCGADVLKTFQTPNLWKDAHIQEIVEKFGLVCVGRVGHDPKGYIAESPILRMHQHNIHLAKEPVQNEISATYIRRALGQGQSVKYLIPDAVITYIKDHGLYTKGSTWKGKSTQSTEGKTS.

2 residues coordinate NAD(+): S14 and F15. The ATP site is built by H22 and K56. W90, T93, G135, and D137 together coordinate NAD(+). K140 lines the ATP pocket. Positions 147, 148, 167, and 198 each coordinate NAD(+). ATP is bound at residue 203–206 (TYIR).

Belongs to the eukaryotic NMN adenylyltransferase family. As to quaternary structure, homotetramer. The cofactor is Mg(2+). In terms of tissue distribution, expressed in lung and spleen with lower levels in placenta and kidney.

The protein resides in the mitochondrion. The enzyme catalyses beta-nicotinamide D-ribonucleotide + ATP + H(+) = diphosphate + NAD(+). It carries out the reaction nicotinate beta-D-ribonucleotide + ATP + H(+) = deamido-NAD(+) + diphosphate. It participates in cofactor biosynthesis; NAD(+) biosynthesis; NAD(+) from nicotinamide D-ribonucleotide: step 1/1. It functions in the pathway cofactor biosynthesis; NAD(+) biosynthesis; deamido-NAD(+) from nicotinate D-ribonucleotide: step 1/1. Activity is strongly inhibited by galotannin. Inhibited by P1-(adenosine-5')-P4-(nicotinic-acid-riboside-5')-tetraphosphate (Nap4AD). Functionally, catalyzes the formation of NAD(+) from nicotinamide mononucleotide (NMN) and ATP. Can also use the deamidated form; nicotinic acid mononucleotide (NaMN) as substrate with the same efficiency. Can use triazofurin monophosphate (TrMP) as substrate. Can also use GTP and ITP as nucleotide donors. Also catalyzes the reverse reaction, i.e. the pyrophosphorolytic cleavage of NAD(+). For the pyrophosphorolytic activity, can use NAD(+), NADH, NaAD, nicotinic acid adenine dinucleotide phosphate (NHD), nicotinamide guanine dinucleotide (NGD) as substrates. Fails to cleave phosphorylated dinucleotides NADP(+), NADPH and NaADP(+). Protects against axonal degeneration following injury. May be involved in the maintenance of axonal integrity. Also functions as a stress-response chaperone protein that prevents toxic aggregation of proteins; this function may be independent of its NAD(+) synthesis activity. The sequence is that of Nicotinamide/nicotinic acid mononucleotide adenylyltransferase 3 from Homo sapiens (Human).